Consider the following 157-residue polypeptide: Transcription antitermination protein NusB (157 aa).

Belongs to the NusB family.

Its function is as follows. Involved in transcription antitermination. Required for transcription of ribosomal RNA (rRNA) genes. Binds specifically to the boxA antiterminator sequence of the ribosomal RNA (rrn) operons. This chain is Transcription antitermination protein NusB, found in Xylella fastidiosa (strain M12).